A 461-amino-acid polypeptide reads, in one-letter code: D-phenylhydantoinase (461 aa).

Residues His59, His61, and Lys151 each coordinate a divalent metal cation. Position 151 is an N6-carboxylysine (Lys151). Tyr156 contributes to the substrate binding site. Residues His182 and His239 each contribute to the a divalent metal cation site. Residue Ser286 participates in substrate binding. Residue Asp313 participates in a divalent metal cation binding. Substrate is bound at residue Asn335.

Belongs to the metallo-dependent hydrolases superfamily. Hydantoinase/dihydropyrimidinase family. In terms of assembly, homotetramer. Requires a divalent metal cation as cofactor. In terms of processing, carboxylation allows a single lysine to coordinate two divalent metal cations.

The catalysed reaction is D-5-phenylhydantoin + H2O = N-carbamoyl-D-phenylglycine + H(+). Catalyzes the stereospecific hydrolysis of the cyclic amide bond of D-hydantoin derivatives with an aromatic side chains at the 5'-position. Has no activity on dihydropyrimidines. The physiological function is unknown. This Shigella boydii serotype 4 (strain Sb227) protein is D-phenylhydantoinase.